Reading from the N-terminus, the 272-residue chain is Tryptophan synthase alpha chain (272 aa).

Catalysis depends on proton acceptor residues Glu49 and Glu60.

It belongs to the TrpA family. In terms of assembly, tetramer of two alpha and two beta chains.

It catalyses the reaction (1S,2R)-1-C-(indol-3-yl)glycerol 3-phosphate + L-serine = D-glyceraldehyde 3-phosphate + L-tryptophan + H2O. Its pathway is amino-acid biosynthesis; L-tryptophan biosynthesis; L-tryptophan from chorismate: step 5/5. Functionally, the alpha subunit is responsible for the aldol cleavage of indoleglycerol phosphate to indole and glyceraldehyde 3-phosphate. The chain is Tryptophan synthase alpha chain from Legionella pneumophila (strain Paris).